The following is a 533-amino-acid chain: Glucose-6-phosphate isomerase (533 aa).

The Proton donor role is filled by glutamate 322. Residues histidine 351 and lysine 455 contribute to the active site.

It belongs to the GPI family.

It localises to the cytoplasm. It carries out the reaction alpha-D-glucose 6-phosphate = beta-D-fructose 6-phosphate. Its pathway is carbohydrate biosynthesis; gluconeogenesis. It participates in carbohydrate degradation; glycolysis; D-glyceraldehyde 3-phosphate and glycerone phosphate from D-glucose: step 2/4. Catalyzes the reversible isomerization of glucose-6-phosphate to fructose-6-phosphate. The protein is Glucose-6-phosphate isomerase of Desulfitobacterium hafniense (strain Y51).